Reading from the N-terminus, the 329-residue chain is MAVTEQDTQVPTLRKIVTSESEPLARRFRALFSLKHLASLQPPTEQTVPAIEAIAAAFSSPSALLKHELAYCLGQSGHDAAIAPLRGVLEDKDEDSMCRHEAAEALGALSDKGSLELLKKMRDDANEVDVVRETCDIAVDRIEWEHGLQKGTEKLKKSDFTSVDPAPPMPESNEAPSIPALEKTLLDTTLPLFQRYRAMFALRDLSSPPDLPTAVPAVHALARGFGDPSALFRHEIAFVFGQLSHPASIPSLTEALSNTKEASMVRHEAAEALGSLGDEEGVEETLKKFLNDPEQVVRDSVIVALDMAEFEKNGEVEYAIVPQAQAIAA.

HEAT-like PBS-type repeat units follow at residues Leu65 to Asp91, Arg99 to Asp124, Phe232 to Asn258, and Val265 to Asp292. His67, Glu68, His100, Glu101, His234, Glu235, His267, and Glu268 together coordinate Fe cation.

The protein belongs to the deoxyhypusine hydroxylase family. Fe(2+) serves as cofactor.

The protein resides in the cytoplasm. Its subcellular location is the nucleus. It carries out the reaction [eIF5A protein]-deoxyhypusine + AH2 + O2 = [eIF5A protein]-hypusine + A + H2O. It participates in protein modification; eIF5A hypusination. Its function is as follows. Catalyzes the hydroxylation of the N(6)-(4-aminobutyl)-L-lysine intermediate to form hypusine, an essential post-translational modification only found in mature eIF-5A factor. This chain is Deoxyhypusine hydroxylase, found in Phaeosphaeria nodorum (strain SN15 / ATCC MYA-4574 / FGSC 10173) (Glume blotch fungus).